A 255-amino-acid chain; its full sequence is Type III pantothenate kinase (255 aa).

7 to 14 contacts ATP; the sequence is DVGNTRLK. Residues tyrosine 96 and 103 to 106 each bind substrate; that span reads GADR. Residue aspartate 105 is the Proton acceptor of the active site. Position 133 (threonine 133) interacts with ATP. Threonine 183 lines the substrate pocket.

It belongs to the type III pantothenate kinase family. As to quaternary structure, homodimer. NH4(+) serves as cofactor. Requires K(+) as cofactor.

It localises to the cytoplasm. The catalysed reaction is (R)-pantothenate + ATP = (R)-4'-phosphopantothenate + ADP + H(+). Its pathway is cofactor biosynthesis; coenzyme A biosynthesis; CoA from (R)-pantothenate: step 1/5. Functionally, catalyzes the phosphorylation of pantothenate (Pan), the first step in CoA biosynthesis. The chain is Type III pantothenate kinase from Polaromonas sp. (strain JS666 / ATCC BAA-500).